The chain runs to 979 residues: MGKSDHLKLFGKKSGGKDARSPETRSRNSRSSTDNRSSIGNNGSDNPLARLSDLDLEEGVDDDADFDWDTLPLPPSDAQSLDNPFNSGEALPSFRRRGGPTSNDAIERDAVDTIRDTSGAYEEPDSASDGEDVGMNDEYQRKRERLVDVNDSASEVSSPRRESREGKNVRFHTETDDINPEDPIAAPAANTEAGTGTNENGEASSSGMKSSINVDDEEGSETSSSNNENKLDHFKKFFRRGSVQNKPDGGEDGAEKGMKSMKDDDNDDEKEGGGGFFSKVIQNIKDANNGLAPGLRNVNLHPEADPEKNSVQEAEVDGDDIQLVDFNSVAKGLVKNYSSLPQSAHHQKEPAILEGDTMYSPSTPSSSPGPESFVAAPMDDYDFDQVDSDGEDSDLDPFVGAQTYVPPPQRVRGGVLGSLLKMYQNEDVSDSFSTASSIGEEPAKPSKPLLDPHFSKGKIPTAGSLLHVPSSAASHLKKNAQQLAGGAHNLATKHYPGRKNEEASGSNSELPSFKNTRPKKNKKHLPKFKKKMAAEAKITVHIADLLQRHRFILRMCKGLMMYGAPTHRLEEYMIMTSRVLEIDGQFLYLPGCMIVSFGDATTRTSEVQLVRCAQGLNLWKLHQVHSIYKQVVHDTMSASEGNILMDKVLQDRNLVPSWVCVLLYGFCSAMVTPYAFGGDWVNLAVSFFIGTCVGALQFIVSARSNMYSNVFEISASIVVSFVGRAFGSIGGSKICFGAVTQGSLALILPGYIILCGALELQSRNLVAGSVRMFYAIIYSLFLSFGITLGAALFGWMYKNATNETNCPYPISPWYRFLFVPAFTIGISLINQAHWIQLPVMVTISCTGYVVTYYSGKHFKNSTEFTASLAAFVIGIMGNLYSRVWKGLAVSAMLPAIFVQVPSGVASQSSLLSGLQSANELIKTNSTKGGDAMPGASDLSGSLSFGITMIQVSIGITVGLFGSSLIVYPFGKKSTGLFSL.

Disordered stretches follow at residues 1-279, 295-318, 337-411, 432-451, and 491-528; these read MGKS…FFSK, LRNVNLHPEADPEKNSVQEAEVDG, YSSL…PQRV, FSTASSIGEEPAKPSKPLLD, and ATKHYPGRKNEEASGSNSELPSFKNTRPKKNKKHLPKF. The span at 15–26 shows a compositional bias: basic and acidic residues; the sequence is GGKDARSPETRS. The span at 29-38 shows a compositional bias: low complexity; the sequence is SRSSTDNRSS. The span at 54-68 shows a compositional bias: acidic residues; it reads LDLEEGVDDDADFDW. Residues 77–86 are compositionally biased toward polar residues; the sequence is DAQSLDNPFN. Over residues 105–115 the composition is skewed to basic and acidic residues; sequence AIERDAVDTIR. The span at 122–135 shows a compositional bias: acidic residues; the sequence is EEPDSASDGEDVGM. 2 stretches are compositionally biased toward basic and acidic residues: residues 138-148 and 158-175; these read EYQRKRERLVD and SPRRESREGKNVRFHTET. The segment covering 192–213 has biased composition (polar residues); sequence EAGTGTNENGEASSSGMKSSIN. Positions 253–263 are enriched in basic and acidic residues; that stretch reads GAEKGMKSMKD. Positions 360 to 372 are enriched in low complexity; sequence SPSTPSSSPGPES. The segment covering 379-395 has biased composition (acidic residues); sequence DDYDFDQVDSDGEDSDL. Over residues 503-515 the composition is skewed to polar residues; the sequence is ASGSNSELPSFKN. A compositionally biased stretch (basic residues) spans 516–528; it reads TRPKKNKKHLPKF. Transmembrane regions (helical) follow at residues 658 to 678, 680 to 700, 710 to 730, 734 to 754, 773 to 793, 809 to 829, 832 to 852, 864 to 884, 886 to 906, and 946 to 966; these read WVCVLLYGFCSAMVTPYAFGG, WVNLAVSFFIGTCVGALQFIV, VFEISASIVVSFVGRAFGSIG, ICFGAVTQGSLALILPGYIIL, FYAIIYSLFLSFGITLGAALF, PISPWYRFLFVPAFTIGISLI, AHWIQLPVMVTISCTGYVVTY, FTASLAAFVIGIMGNLYSRVW, GLAVSAMLPAIFVQVPSGVAS, and ITMIQVSIGITVGLFGSSLIV.

Belongs to the ThrE exporter (TC 2.A.79) family.

The protein resides in the membrane. In Zygosaccharomyces rouxii (strain ATCC 2623 / CBS 732 / NBRC 1130 / NCYC 568 / NRRL Y-229), this protein is Pheromone-regulated membrane protein 10.